A 197-amino-acid chain; its full sequence is Adrenodoxin-like protein 2, mitochondrial (197 aa).

A mitochondrion-targeting transit peptide spans Met-1–Gly-74. Positions Ile-81–Thr-184 constitute a 2Fe-2S ferredoxin-type domain. Positions 118, 124, 127, and 165 each coordinate [2Fe-2S] cluster.

It belongs to the adrenodoxin/putidaredoxin family. Requires [2Fe-2S] cluster as cofactor.

The protein resides in the mitochondrion. Its function is as follows. Associates with the adrenodoxin reductase MFDR to form an efficient low potential electron transfer chain that is able to reduce cytochrome C. This is Adrenodoxin-like protein 2, mitochondrial from Arabidopsis thaliana (Mouse-ear cress).